The sequence spans 192 residues: MESLGRKVKEDGVVIDEKILKVDGFLNHQIDAKLMNDVGKTFYESFKDAGITKILTIEASGIAPAIMASFHFDVPCLFAKKAKPSTLKDGFYSTDIHSFTKNKTSTVIVSEEFLGADDKVLIIDDFLANGDASLGLNDIVKQANATTVGVGIVVEKSFQNGRQRLEDAGLYVSSLCKVASLKGNKVTLLGEA.

Xanthine-binding residues include Leu20 and Asn27. Residue Ala128–Ala132 participates in 5-phospho-alpha-D-ribose 1-diphosphate binding. A xanthine-binding site is contributed by Lys156.

Belongs to the purine/pyrimidine phosphoribosyltransferase family. Xpt subfamily. Homodimer.

It localises to the cytoplasm. The enzyme catalyses XMP + diphosphate = xanthine + 5-phospho-alpha-D-ribose 1-diphosphate. It functions in the pathway purine metabolism; XMP biosynthesis via salvage pathway; XMP from xanthine: step 1/1. In terms of biological role, converts the preformed base xanthine, a product of nucleic acid breakdown, to xanthosine 5'-monophosphate (XMP), so it can be reused for RNA or DNA synthesis. In Staphylococcus epidermidis (strain ATCC 35984 / DSM 28319 / BCRC 17069 / CCUG 31568 / BM 3577 / RP62A), this protein is Xanthine phosphoribosyltransferase.